Reading from the N-terminus, the 290-residue chain is Elongation factor Ts, mitochondrial 1 (290 aa).

It belongs to the EF-Ts family.

It is found in the mitochondrion. Its function is as follows. Associates with the EF-Tu.GDP complex and induces the exchange of GDP to GTP. It remains bound to the aminoacyl-tRNA.EF-Tu.GTP complex up to the GTP hydrolysis stage on the ribosome. This chain is Elongation factor Ts, mitochondrial 1, found in Postia placenta (strain ATCC 44394 / Madison 698-R) (Brown rot fungus).